The following is a 219-amino-acid chain: Cytidylate kinase (219 aa).

An ATP-binding site is contributed by G11–A19.

This sequence belongs to the cytidylate kinase family. Type 1 subfamily.

It is found in the cytoplasm. It carries out the reaction CMP + ATP = CDP + ADP. The enzyme catalyses dCMP + ATP = dCDP + ADP. This is Cytidylate kinase from Mesoplasma florum (strain ATCC 33453 / NBRC 100688 / NCTC 11704 / L1) (Acholeplasma florum).